We begin with the raw amino-acid sequence, 201 residues long: Riboflavin synthase (201 aa).

Lumazine-binding repeat units lie at residues M1 to H97 and I98 to M197. 2,4-dihydroxypteridine contacts are provided by residues G4–V6, C47–T49, D62–T67, G101–V103, K136, S145–T147, and S162–T167.

As to quaternary structure, homotrimer.

The enzyme catalyses 2 6,7-dimethyl-8-(1-D-ribityl)lumazine + H(+) = 5-amino-6-(D-ribitylamino)uracil + riboflavin. Its pathway is cofactor biosynthesis; riboflavin biosynthesis; riboflavin from 2-hydroxy-3-oxobutyl phosphate and 5-amino-6-(D-ribitylamino)uracil: step 2/2. In terms of biological role, catalyzes the dismutation of two molecules of 6,7-dimethyl-8-ribityllumazine, resulting in the formation of riboflavin and 5-amino-6-(D-ribitylamino)uracil. In Mycobacterium bovis (strain ATCC BAA-935 / AF2122/97), this protein is Riboflavin synthase (ribE).